A 353-amino-acid polypeptide reads, in one-letter code: Photosystem II protein D1 (353 aa).

T2 carries the N-acetylthreonine modification. Residue T2 is modified to Phosphothreonine. 3 consecutive transmembrane segments (helical) span residues 29 to 46, 118 to 133, and 142 to 156; these read YIGWFGVLMIPTLLTATS, HFFLGICSYMGREWEL, and WIAVAYSAPVAAATA. H118 is a chlorophyll a binding site. Y126 contributes to the pheophytin a binding site. Positions 170 and 189 each coordinate [CaMn4O5] cluster. Residues 197–218 form a helical membrane-spanning segment; the sequence is FHMLGVAGVFGGSLFSAMHGSL. H198 lines the chlorophyll a pocket. Residues H215 and 264-265 each bind a quinone; that span reads SF. Residue H215 coordinates Fe cation. Position 272 (H272) interacts with Fe cation. A helical transmembrane segment spans residues 274–288; that stretch reads FLAAWPVVGIWFTAL. The [CaMn4O5] cluster site is built by H332, E333, D342, and A344. The propeptide occupies 345-353; it reads VVEAPAVNG.

The protein belongs to the reaction center PufL/M/PsbA/D family. PSII is composed of 1 copy each of membrane proteins PsbA, PsbB, PsbC, PsbD, PsbE, PsbF, PsbH, PsbI, PsbJ, PsbK, PsbL, PsbM, PsbT, PsbX, PsbY, PsbZ, Psb30/Ycf12, at least 3 peripheral proteins of the oxygen-evolving complex and a large number of cofactors. It forms dimeric complexes. The D1/D2 heterodimer binds P680, chlorophylls that are the primary electron donor of PSII, and subsequent electron acceptors. It shares a non-heme iron and each subunit binds pheophytin, quinone, additional chlorophylls, carotenoids and lipids. D1 provides most of the ligands for the Mn4-Ca-O5 cluster of the oxygen-evolving complex (OEC). There is also a Cl(-1) ion associated with D1 and D2, which is required for oxygen evolution. The PSII complex binds additional chlorophylls, carotenoids and specific lipids. is required as a cofactor. Post-translationally, tyr-161 forms a radical intermediate that is referred to as redox-active TyrZ, YZ or Y-Z. In terms of processing, C-terminally processed by CTPA; processing is essential to allow assembly of the oxygen-evolving complex and thus photosynthetic growth.

It is found in the plastid. It localises to the chloroplast thylakoid membrane. The catalysed reaction is 2 a plastoquinone + 4 hnu + 2 H2O = 2 a plastoquinol + O2. Functionally, photosystem II (PSII) is a light-driven water:plastoquinone oxidoreductase that uses light energy to abstract electrons from H(2)O, generating O(2) and a proton gradient subsequently used for ATP formation. It consists of a core antenna complex that captures photons, and an electron transfer chain that converts photonic excitation into a charge separation. The D1/D2 (PsbA/PsbD) reaction center heterodimer binds P680, the primary electron donor of PSII as well as several subsequent electron acceptors. In Chlorella vulgaris (Green alga), this protein is Photosystem II protein D1.